We begin with the raw amino-acid sequence, 309 residues long: 1,2-phenylacetyl-CoA epoxidase, subunit A (309 aa).

Substrate is bound by residues R33, Q37, 103 to 106, N132, M193, 202 to 204, K214, and N218; these read KYSS and SPN.

Forms a stable heterotetramer (dimer of heterodimers) with PaaC. Fe cation serves as cofactor.

It carries out the reaction phenylacetyl-CoA + NADPH + O2 + H(+) = 2-(1,2-epoxy-1,2-dihydrophenyl)acetyl-CoA + NADP(+) + H2O. The protein operates within aromatic compound metabolism; phenylacetate degradation. Its function is as follows. Component of 1,2-phenylacetyl-CoA epoxidase multicomponent enzyme system which catalyzes the reduction of phenylacetyl-CoA (PA-CoA) to form 1,2-epoxyphenylacetyl-CoA. The subunit A is the catalytic subunit involved in the incorporation of one atom of molecular oxygen into phenylacetyl-CoA. This chain is 1,2-phenylacetyl-CoA epoxidase, subunit A (paaA), found in Escherichia coli (strain K12).